We begin with the raw amino-acid sequence, 256 residues long: MMHLYWVALKSIWAKEIHRFMRIWVQTLVPPVITMTLYFIIFGNLIGSRIGDMHGFSYMQFIVPGLIMMSVITNAYANVASSFFGAKFQRNIEELLVAPVPTHVIIAGYVGGGVARGLFVGILVTAISLFFVPFQVHSWVFVALTLVLTAVLFSLAGLLNGVFAKTFDDISLVPTFVLTPLTYLGGVFYSLTLLPPFWQGLSHLNPIVYMISGFRYGFLGINDVPLVTTFGVLVVFIVAFYLICWSLIQRGRGLRS.

Residues 1-22 are Periplasmic-facing; that stretch reads MMHLYWVALKSIWAKEIHRFMR. Positions 22–251 constitute an ABC transmembrane type-2 domain; sequence RIWVQTLVPP…LICWSLIQRG (230 aa). Residues 23–43 traverse the membrane as a helical segment; it reads IWVQTLVPPVITMTLYFIIFG. The Cytoplasmic portion of the chain corresponds to 44-52; it reads NLIGSRIGD. Residues 53-73 traverse the membrane as a helical segment; that stretch reads MHGFSYMQFIVPGLIMMSVIT. Residues 74–94 lie on the Periplasmic side of the membrane; it reads NAYANVASSFFGAKFQRNIEE. A helical membrane pass occupies residues 95 to 115; the sequence is LLVAPVPTHVIIAGYVGGGVA. Position 116 (Arg116) is a topological domain, cytoplasmic. A helical membrane pass occupies residues 117–137; that stretch reads GLFVGILVTAISLFFVPFQVH. Residue Ser138 is a topological domain, periplasmic. Residues 139–159 traverse the membrane as a helical segment; the sequence is WVFVALTLVLTAVLFSLAGLL. Residues 160–169 are Cytoplasmic-facing; it reads NGVFAKTFDD. A helical membrane pass occupies residues 170-190; sequence ISLVPTFVLTPLTYLGGVFYS. Residues 191–223 lie on the Periplasmic side of the membrane; sequence LTLLPPFWQGLSHLNPIVYMISGFRYGFLGIND. The chain crosses the membrane as a helical span at residues 224 to 244; that stretch reads VPLVTTFGVLVVFIVAFYLIC. Topologically, residues 245–256 are cytoplasmic; that stretch reads WSLIQRGRGLRS.

This sequence belongs to the ABC-2 integral membrane protein family.

It localises to the cell inner membrane. The chain is Inner membrane transport permease YadH (yadH) from Escherichia coli O157:H7.